A 180-amino-acid polypeptide reads, in one-letter code: uncharacterized protein (180 aa).

The stretch at 114-147 (EDIYEDIVDVRLENQSLEEQLEDFKECSRALKKY) forms a coiled coil.

It belongs to the mimivirus L74/L77/R857 family.

This is an uncharacterized protein from Acanthamoeba polyphaga mimivirus (APMV).